Here is a 72-residue protein sequence, read N- to C-terminus: Translation initiation factor IF-1 (72 aa).

Residues M1–K72 form the S1-like domain.

Belongs to the IF-1 family. As to quaternary structure, component of the 30S ribosomal translation pre-initiation complex which assembles on the 30S ribosome in the order IF-2 and IF-3, IF-1 and N-formylmethionyl-tRNA(fMet); mRNA recruitment can occur at any time during PIC assembly.

The protein localises to the cytoplasm. Functionally, one of the essential components for the initiation of protein synthesis. Stabilizes the binding of IF-2 and IF-3 on the 30S subunit to which N-formylmethionyl-tRNA(fMet) subsequently binds. Helps modulate mRNA selection, yielding the 30S pre-initiation complex (PIC). Upon addition of the 50S ribosomal subunit IF-1, IF-2 and IF-3 are released leaving the mature 70S translation initiation complex. This Carboxydothermus hydrogenoformans (strain ATCC BAA-161 / DSM 6008 / Z-2901) protein is Translation initiation factor IF-1.